Here is a 181-residue protein sequence, read N- to C-terminus: Translationally-controlled tumor protein homolog (181 aa).

The 181-residue stretch at 1 to 181 (MLIYKDIFTD…VKEAILEEKC (181 aa)) folds into the TCTP domain.

The protein belongs to the TCTP family.

It is found in the cytoplasm. In terms of biological role, involved in calcium binding and microtubule stabilization. The polypeptide is Translationally-controlled tumor protein homolog (tct-1) (Caenorhabditis briggsae).